Reading from the N-terminus, the 144-residue chain is Protein NrdI (144 aa).

It belongs to the NrdI family.

Functionally, probably involved in ribonucleotide reductase function. This is Protein NrdI from Streptococcus pyogenes serotype M4 (strain MGAS10750).